The chain runs to 374 residues: Putative glutamate--cysteine ligase 2-2 (374 aa).

This sequence belongs to the glutamate--cysteine ligase type 2 family. YbdK subfamily.

It carries out the reaction L-cysteine + L-glutamate + ATP = gamma-L-glutamyl-L-cysteine + ADP + phosphate + H(+). In terms of biological role, ATP-dependent carboxylate-amine ligase which exhibits weak glutamate--cysteine ligase activity. This Rhodococcus jostii (strain RHA1) protein is Putative glutamate--cysteine ligase 2-2.